The chain runs to 248 residues: Sugar fermentation stimulation protein homolog (248 aa).

This sequence belongs to the SfsA family.

This Methylorubrum extorquens (strain PA1) (Methylobacterium extorquens) protein is Sugar fermentation stimulation protein homolog.